A 466-amino-acid polypeptide reads, in one-letter code: UDP-glycosyltransferase 91B1 (466 aa).

UDP-alpha-D-glucose is bound by residues Thr-286, 342–344 (VPQ), 359–367 (HCGWGSAVE), and 381–384 (NLDQ).

This sequence belongs to the UDP-glycosyltransferase family.

The polypeptide is UDP-glycosyltransferase 91B1 (UGT91B1) (Arabidopsis thaliana (Mouse-ear cress)).